Here is a 368-residue protein sequence, read N- to C-terminus: Solute carrier family 35 member G1 (368 aa).

10 helical membrane passes run 72–92 (GLGLFYTVLSAFLFSVASLFV), 100–120 (AVEISAFRCVVQMLVIIPCLI), 134–154 (LFLFLRGVFGSSAMILMYYAF), 161–181 (DATVIAFSCPVFTSIFAWIFL), 190–210 (AFFTLFAIAGVILIVRPPFIF), 225–245 (IKGTFAAIGHAVLAAITLVIL), 256–276 (LSIWYYVILGLPEAIIILFVI), 289–309 (LFLILIGLLGLGGQIFITKAV), 316–336 (LVAIMKTMDIVFAFIFQIAFF), and 340–360 (PTWWTVGGALCVVVSTTGATI). EamA domains are found at residues 83 to 205 (FLFS…LIVR) and 236 to 360 (VLAA…GATI).

It belongs to the TMEM20 family. In terms of assembly, interacts with STIM1; stimulated by depletion of intracellular calcium. Interacts with ORAI1. Interacts with the plasma membrane calcium-transporting ATPases ATP2B1 and ATP2B4. Interacts with ATP1A1, ATP2A2, KPNB1 and XPO1.

It is found in the cell membrane. The protein localises to the endoplasmic reticulum membrane. Its function is as follows. May play a role in intracellular calcium sensing and homeostasis. May act as a negative regulator of plasma membrane calcium-transporting ATPases preventing calcium efflux from the cell. The protein is Solute carrier family 35 member G1 (Slc35g1) of Mus musculus (Mouse).